The primary structure comprises 374 residues: Wnt inhibitory factor 1 (374 aa).

Positions 1–28 (MSLTGYFAAPLCSIFLFILAHADAGQQE) are cleaved as a signal peptide. One can recognise a WIF domain in the interval 33–172 (MWIDAHQARV…PQNAIFFKTC (140 aa)). N-linked (GlcNAc...) asparagine glycosylation is present at asparagine 83. Disulfide bonds link cysteine 135-cysteine 172, cysteine 177-cysteine 187, cysteine 181-cysteine 193, cysteine 195-cysteine 204, cysteine 209-cysteine 219, cysteine 213-cysteine 225, and cysteine 227-cysteine 236. EGF-like domains are found at residues 173 to 205 (QQAK…PHCE), 208 to 237 (LCMP…INCD), 237 to 269 (DKVN…EQCE), 270 to 301 (TSKC…DLCS), and 302 to 333 (KPVC…RYCN). N-linked (GlcNAc...) asparagine glycosylation occurs at asparagine 240. Cystine bridges form between cysteine 241–cysteine 251, cysteine 245–cysteine 257, cysteine 259–cysteine 268, cysteine 273–cysteine 283, cysteine 277–cysteine 289, cysteine 291–cysteine 300, cysteine 305–cysteine 315, cysteine 309–cysteine 321, and cysteine 323–cysteine 332. The tract at residues 343-374 (ALRPTGSRNRQHTPSPKRTEDRQALPESNYIW) is disordered. The span at 348 to 358 (GSRNRQHTPSP) shows a compositional bias: polar residues.

During somatogenesis, expressed predominantly in unsegmented paraxial presomitic mesoderm and, to a much lesser extent, in newly segmented somites.

It is found in the secreted. Functionally, binds to WNT proteins and inhibits their activities. May be involved in mesoderm segmentation. The polypeptide is Wnt inhibitory factor 1 (wif1) (Xenopus laevis (African clawed frog)).